Here is a 124-residue protein sequence, read N- to C-terminus: Ubiquitin-related modifier 1 (124 aa).

Residues 34–53 form a disordered region; sequence IPSLVPKDNTTSAKNPPPKD. A 1-thioglycine modification is found at G124. G124 participates in a covalent cross-link: Glycyl lysine isopeptide (Gly-Lys) (interchain with K-? in acceptor proteins).

It belongs to the URM1 family. C-terminal thiocarboxylation occurs in 2 steps, it is first acyl-adenylated (-COAMP) via the hesA/moeB/thiF part of UBA4, then thiocarboxylated (-COSH) via the rhodanese domain of UBA4.

It localises to the cytoplasm. It participates in tRNA modification; 5-methoxycarbonylmethyl-2-thiouridine-tRNA biosynthesis. Acts as a sulfur carrier required for 2-thiolation of mcm(5)S(2)U at tRNA wobble positions of cytosolic tRNA(Lys), tRNA(Glu) and tRNA(Gln). Serves as sulfur donor in tRNA 2-thiolation reaction by being thiocarboxylated (-COSH) at its C-terminus by the MOCS3 homolog UBA4. The sulfur is then transferred to tRNA to form 2-thiolation of mcm(5)S(2)U. Prior mcm(5) tRNA modification by the elongator complex is required for 2-thiolation. Also acts as a ubiquitin-like protein (UBL) that is covalently conjugated via an isopeptide bond to lysine residues of target proteins such as AHP1. The thiocarboxylated form serves as substrate for conjugation and oxidative stress specifically induces the formation of UBL-protein conjugates. The protein is Ubiquitin-related modifier 1 of Coprinopsis cinerea (strain Okayama-7 / 130 / ATCC MYA-4618 / FGSC 9003) (Inky cap fungus).